A 146-amino-acid chain; its full sequence is Angiogenin (146 aa).

The N-terminal stretch at 1–24 is a signal peptide; it reads MVMGLGLFLLVFMLGLGLTSPTLA. Glutamine 25 carries the pyrrolidone carboxylic acid modification. Residue histidine 37 is the Proton acceptor of the active site. Residue arginine 45 coordinates tRNA. 3 cysteine pairs are disulfide-bonded: cysteine 50-cysteine 105, cysteine 63-cysteine 116, and cysteine 81-cysteine 131. Positions 55 to 59 match the Nucleolar localization signal motif; the sequence is RRQGM. Residues cysteine 105 and isoleucine 127 each coordinate tRNA. The Proton donor role is filled by histidine 138.

The protein belongs to the pancreatic ribonuclease family. As to quaternary structure, homodimer. Interacts with RNH1; inhibiting ANG ribonuclease activity. Interacts with PCNA.

Its subcellular location is the secreted. It is found in the nucleus. The protein resides in the nucleolus. The protein localises to the cytoplasm. It localises to the stress granule. Its activity is regulated as follows. Has weak tRNA ribonuclease activity by itself due to partial autoinhibition by its C-terminus, which folds into a short alpha-helix that partially occludes the substrate-binding site. In absence of stress, the ribonuclease activity is inhibited by RNH1 in the cytoplasm. In response to stress, dissociates from RNH1 in the cytoplasm and associates with cytoplasmic ribosomes with vacant A-sites: ribosomes directly activate the tRNA ribonuclease activity of ANG by refolding the C-terminal alpha-helix. In response to stress, the angiogenic activity of ANG is inhibited by RNH1 in the nucleus. Its function is as follows. Secreted ribonuclease that can either promote or restrict cell proliferation of target cells, depending on the context. Endocytosed in target cells via its receptor PLXNB2 and translocates to the cytoplasm or nucleus. Under stress conditions, localizes to the cytoplasm and promotes the assembly of stress granules (SGs): specifically cleaves a subset of tRNAs within anticodon loops to produce tRNA-derived stress-induced fragments (tiRNAs), resulting in translation repression and inhibition of cell proliferation. tiRNas also prevent formation of apoptosome, thereby promoting cell survival. Preferentially cleaves RNAs between a pyrimidine and an adenosine residue, suggesting that it cleaves the anticodon loop of tRNA(Ala) (32-UUAGCAU-38) after positions 33 and 36. Cleaves a subset of tRNAs, including tRNA(Ala), tRNA(Glu), tRNA(Gly), tRNA(Lys), tRNA(Val), tRNA(His), tRNA(Asp) and tRNA(Sec). Under growth conditions and in differentiated cells, translocates to the nucleus and stimulates ribosomal RNA (rRNA) transcription, including that containing the initiation site sequences of 45S rRNA, thereby promoting cell growth and proliferation. Angiogenin induces vascularization of normal and malignant tissues via its ability to promote rRNA transcription. Involved in hematopoietic stem and progenitor cell (HSPC) growth and survival by promoting rRNA transcription in growth conditions and inhibiting translation in response to stress, respectively. Mediates the crosstalk between myeloid and intestinal epithelial cells to protect the intestinal epithelial barrier integrity: secreted by myeloid cells and promotes intestinal epithelial cells proliferation and survival. Also mediates osteoclast-endothelial cell crosstalk in growing bone: produced by osteoclasts and protects the neighboring vascular cells against senescence by promoting rRNA transcription. This chain is Angiogenin (ANG), found in Miopithecus talapoin (Angolan talapoin).